The chain runs to 451 residues: AAA-ATPase At3g50940 (451 aa).

The signal sequence occupies residues 1–25; it reads MSSSSESHLATAKTALTAVASVAAA. 254–261 provides a ligand contact to ATP; it reads GPPGTGKS.

The protein belongs to the AAA ATPase family. BCS1 subfamily. Mg(2+) serves as cofactor.

The catalysed reaction is ATP + H2O = ADP + phosphate + H(+). This chain is AAA-ATPase At3g50940, found in Arabidopsis thaliana (Mouse-ear cress).